The chain runs to 160 residues: Peripheral myelin protein 22 (160 aa).

Met1 is a topological domain (cytoplasmic). A helical membrane pass occupies residues 2–31 (LLLLLGILFLHIAVLVLLFVSTIVSQWLVG). The Extracellular portion of the chain corresponds to 32–64 (NGHRTDLWQNCTTSALGAVQHCYSSSVSEWLQS). Residue Asn41 is glycosylated (N-linked (GlcNAc...) asparagine). The chain crosses the membrane as a helical span at residues 65–91 (VQATMILSVIFSVLSLFLFFCQLFTLT). Topologically, residues 92-95 (KGGR) are cytoplasmic. The chain crosses the membrane as a helical span at residues 96 to 119 (FYITGVFQILAGLCVMSAAAIYTV). Topologically, residues 120–133 (RHSEWHVNNDYSYG) are extracellular. A helical membrane pass occupies residues 134–156 (FAYILAWVAFPLALLSGIIYVIL). Residues 157-160 (RKRE) are Cytoplasmic-facing.

Belongs to the PMP-22/EMP/MP20 family. Ubiquitinated by the DCX(DCAF13) E3 ubiquitin ligase complex, leading to its degradation. Found exclusively in the peripheral nervous system. Present in both myelinating and nonmyelinating Schwann cells. Found in the tumors of Schwann cell lineage where axons are present (neurofibromas) but not where axons are absent (schwannomas).

It localises to the cell membrane. In terms of biological role, might be involved in growth regulation, and in myelinization in the peripheral nervous system. The sequence is that of Peripheral myelin protein 22 (Pmp22) from Rattus norvegicus (Rat).